The primary structure comprises 258 residues: Hydroxyacylglutathione hydrolase cytoplasmic (258 aa).

2 residues coordinate Zn(2+): histidine 54 and histidine 56. 2 residues coordinate Fe cation: aspartate 58 and histidine 59. Zn(2+) contacts are provided by histidine 112 and aspartate 135. Aspartate 135 is a binding site for Fe cation. Substrate contacts are provided by residues 144 to 146 and 174 to 176; these read KFF and HEY. Histidine 174 provides a ligand contact to Fe cation.

It belongs to the metallo-beta-lactamase superfamily. Glyoxalase II family. As to quaternary structure, homodimer. The cofactor is Fe(2+). Zn(2+) is required as a cofactor. It depends on Fe(3+) as a cofactor. As to expression, mainly expressed in flowers and flower buds. Also detected in roots and leaves.

The protein resides in the cytoplasm. It carries out the reaction an S-(2-hydroxyacyl)glutathione + H2O = a 2-hydroxy carboxylate + glutathione + H(+). It functions in the pathway secondary metabolite metabolism; methylglyoxal degradation; (R)-lactate from methylglyoxal: step 2/2. Its function is as follows. Thiolesterase that catalyzes the hydrolysis of S-D-lactoyl-glutathione to form glutathione and D-lactic acid. The sequence is that of Hydroxyacylglutathione hydrolase cytoplasmic (GLX2-2) from Arabidopsis thaliana (Mouse-ear cress).